Consider the following 701-residue polypeptide: Elongation factor G (701 aa).

The tr-type G domain maps to 8–291 (SRYRNIGIVA…AVIDYLPAPV (284 aa)). Residues 17–24 (AHVDAGKT), 89–93 (DTPGH), and 143–146 (NKMD) contribute to the GTP site.

Belongs to the TRAFAC class translation factor GTPase superfamily. Classic translation factor GTPase family. EF-G/EF-2 subfamily.

It is found in the cytoplasm. Its function is as follows. Catalyzes the GTP-dependent ribosomal translocation step during translation elongation. During this step, the ribosome changes from the pre-translocational (PRE) to the post-translocational (POST) state as the newly formed A-site-bound peptidyl-tRNA and P-site-bound deacylated tRNA move to the P and E sites, respectively. Catalyzes the coordinated movement of the two tRNA molecules, the mRNA and conformational changes in the ribosome. The sequence is that of Elongation factor G from Pseudomonas fluorescens (strain SBW25).